A 378-amino-acid polypeptide reads, in one-letter code: Cytochrome P450 monooxygenase pytD (378 aa).

Cys-321 lines the heme pocket.

This sequence belongs to the cytochrome P450 family. Heme is required as a cofactor.

Its pathway is secondary metabolite biosynthesis. Cytochrome P450 monooxygenase pytD; part of the gene cluster that mediates the biosynthesis of pyranterreones, a family of antioxidative compounds. The first step of pyranonigrins biosynthesis is performed by the hybrid PKS-NRPS synthetase pytA that condenses 4 malonyl-CoA units ato the acetyl starter unit by the modular PKS of pytA. The acyl chain is then connected to an L-serine through the amide bond by the modular NRPS of pytA. A tetramic acid is formed and released from the PKS-NRPS pytA to give pyranterreone 5 with the help of the thioesterase pytI. Pyranterreone 5 could be methylated by pytC to afford pyranterreone 6. Both pyranterreones 5 and 6 are subsequently oxidized by the FAD-linked oxidoreductase pytB and the cytochrome P450 monooxygenase pytD to form the fused gamma-pyrone core, resulting in pyranterreones 7 and 11, respectively. The hydroxy group at C-8 of pyranterreones 7 and 11 are dehydrated by the aspartyl protease pytH to form a delta-7 double bond to give pyranterreones 3 and 1, 2 accordingly. The exo-methylene of pyranterreone 3 could be reduced into a pendant methyl by reductase pytE to provide pyranterreone 4, also known as cordylactam. Pyranterreone 4 can be reconverted to pyranterreone 3 through pytB-catalyzed dehydrogenation or further oxidized to pyranterreones 9 and 10. The sequence is that of Cytochrome P450 monooxygenase pytD from Aspergillus terreus (strain NIH 2624 / FGSC A1156).